Here is a 100-residue protein sequence, read N- to C-terminus: DNA-directed RNA polymerase subunit Rpo11 (100 aa).

It belongs to the archaeal Rpo11/eukaryotic RPB11/RPC19 RNA polymerase subunit family. In terms of assembly, part of the RNA polymerase complex.

The protein resides in the cytoplasm. It carries out the reaction RNA(n) + a ribonucleoside 5'-triphosphate = RNA(n+1) + diphosphate. In terms of biological role, DNA-dependent RNA polymerase (RNAP) catalyzes the transcription of DNA into RNA using the four ribonucleoside triphosphates as substrates. In Picrophilus torridus (strain ATCC 700027 / DSM 9790 / JCM 10055 / NBRC 100828 / KAW 2/3), this protein is DNA-directed RNA polymerase subunit Rpo11.